Consider the following 684-residue polypeptide: Actin-related protein 5 (684 aa).

Residues 262–469 adopt a coiled-coil conformation; it reads KEKSVIIQLP…ARQKQKQKAN (208 aa). Disordered regions lie at residues 392-443 and 481-500; these read KEKK…PEHY and VNPTNHGNYGEKGEEVEDPE. The segment covering 402-443 has biased composition (basic and acidic residues); the sequence is SMKDGRLAQKRKRDEEKEKEKEKEEERDRQEEESFLKDPEHY.

This sequence belongs to the actin family. ARP5 subfamily. In terms of assembly, component of the chromatin-remodeling Ino80 complex.

The protein localises to the nucleus. Functionally, proposed core component of the chromatin remodeling Ino80 complex which is involved in transcriptional regulation, DNA replication and probably DNA repair. This is Actin-related protein 5 (arpE) from Dictyostelium discoideum (Social amoeba).